The chain runs to 198 residues: Ribosome maturation factor RimP (198 aa).

Belongs to the RimP family.

Its subcellular location is the cytoplasm. In terms of biological role, required for maturation of 30S ribosomal subunits. In Rhizobium etli (strain CIAT 652), this protein is Ribosome maturation factor RimP.